A 143-amino-acid polypeptide reads, in one-letter code: Large ribosomal subunit protein uL11 (143 aa).

Belongs to the universal ribosomal protein uL11 family. In terms of assembly, part of the ribosomal stalk of the 50S ribosomal subunit. Interacts with L10 and the large rRNA to form the base of the stalk. L10 forms an elongated spine to which L12 dimers bind in a sequential fashion forming a multimeric L10(L12)X complex. In terms of processing, one or more lysine residues are methylated.

Its function is as follows. Forms part of the ribosomal stalk which helps the ribosome interact with GTP-bound translation factors. In Borrelia garinii subsp. bavariensis (strain ATCC BAA-2496 / DSM 23469 / PBi) (Borreliella bavariensis), this protein is Large ribosomal subunit protein uL11.